Reading from the N-terminus, the 492-residue chain is Transmembrane protease serine 2 (492 aa).

The Cytoplasmic segment spans residues 1 to 84 (MALNSGSPPA…TVCTSKTKKA (84 aa)). A helical; Signal-anchor for type II membrane protein transmembrane segment spans residues 85-105 (LCITLTLGTFLVGAALAAGLL). Residues 106–492 (WKFMGSKCSN…WIYRQMRADG (387 aa)) lie on the Extracellular side of the membrane. 9 cysteine pairs are disulfide-bonded: cysteine 113–cysteine 126, cysteine 120–cysteine 139, cysteine 133–cysteine 148, cysteine 172–cysteine 231, cysteine 185–cysteine 241, cysteine 244–cysteine 365, cysteine 281–cysteine 297, cysteine 410–cysteine 426, and cysteine 437–cysteine 465. In terms of domain architecture, LDL-receptor class A spans 118 to 148 (IECDSSGTCINPSNWCDGVSHCPGGEDENRC). 5 residues coordinate Ca(2+): asparagine 131, aspartate 134, valine 136, aspartate 144, and glutamate 145. The SRCR domain maps to 149–242 (VRLYGPNFIL…SKAVVSLRCI (94 aa)). N-linked (GlcNAc...) asparagine glycans are attached at residues asparagine 213 and asparagine 249. The Peptidase S1 domain maps to 256 to 492 (IVGGESALPG…WIYRQMRADG (237 aa)). Catalysis depends on charge relay system residues histidine 296 and aspartate 345. The tract at residues 340–470 (KTKNNDIALM…WGSGCAKAYR (131 aa)) is HKU1-CoV S protein-binding. Serine 441 serves as the catalytic Charge relay system.

The protein belongs to the peptidase S1 family. As to quaternary structure, the catalytically active form interacts with ACE2. Proteolytically processed; by an autocatalytic mechanism. Autocleavage induces active conformation. In terms of tissue distribution, expressed in several tissues that comprise large populations of epithelial cells with the highest level of transcripts measured in the prostate gland. Expressed in type II pneumocytes in the lung (at protein level). Expressed strongly in small intestine. Also expressed in colon, stomach and salivary gland. Coexpressed with ACE2 within lung type II pneumocytes, ileal absorptive enterocytes, intestinal epithelial cells, cornea, gallbladder and nasal goblet secretory cells.

It localises to the cell membrane. Its subcellular location is the secreted. It carries out the reaction The enzyme cleaves angiotensin-converting enzyme 2 (EC 3.4.17.23) and cleaves influenzea A and B virus and coronavirus spike glycoproteins at arginine residues.. Its function is as follows. Plasma membrane-anchored serine protease that cleaves at arginine residues. Participates in proteolytic cascades of relevance for the normal physiologic function of the prostate. Androgen-induced TMPRSS2 activates several substrates that include pro-hepatocyte growth factor/HGF, the protease activated receptor-2/F2RL1 or matriptase/ST14 leading to extracellular matrix disruption and metastasis of prostate cancer cells. In addition, activates trigeminal neurons and contribute to both spontaneous pain and mechanical allodynia. Functionally, (Microbial infection) Facilitates human coronaviruses SARS-CoV and SARS-CoV-2 infections via two independent mechanisms, proteolytic cleavage of ACE2 receptor which promotes viral uptake, and cleavage of coronavirus spike glycoproteins which activates the glycoprotein for host cell entry. The cleavage of SARS-COV2 spike glycoprotein occurs between the S2 and S2' site. Upon SARS-CoV-2 infection, increases syncytia formation by accelerating the fusion process. Proteolytically cleaves and activates the spike glycoproteins of human coronavirus 229E (HCoV-229E) and human coronavirus EMC (HCoV-EMC) and the fusion glycoproteins F0 of Sendai virus (SeV), human metapneumovirus (HMPV), human parainfluenza 1, 2, 3, 4a and 4b viruses (HPIV). Essential for spread and pathogenesis of influenza A virus (strains H1N1, H3N2 and H7N9); involved in proteolytic cleavage and activation of hemagglutinin (HA) protein which is essential for viral infectivity. (Microbial infection) Receptor for human coronavirus HKU1-CoV, acts synergistically with disialoside glycans to facilitate the entry of the virus. After binding to cell-surface disialoside glycans, the viral S protein interacts with the inactive form of TMPRSS2 and inhibits its protease activity. The sequence is that of Transmembrane protease serine 2 from Homo sapiens (Human).